Here is a 223-residue protein sequence, read N- to C-terminus: Ribonuclease DdI (223 aa).

Positions 1-25 (MRLIAALLSVLLIASTAQSTVTIYE) are cleaved as a signal peptide. Cys46 and Cys51 are oxidised to a cystine. Residues His63, Glu113, and His117 contribute to the active site. The cysteines at positions 78 and 120 are disulfide-linked. A glycan (N-linked (GlcNAc...) asparagine) is linked at Asn144. 2 disulfide bridges follow: Cys183–Cys213 and Cys194–Cys205.

It belongs to the RNase T2 family.

The protein localises to the lysosome. It catalyses the reaction a ribonucleotidyl-ribonucleotide-RNA + H2O = a 3'-end 3'-phospho-ribonucleotide-RNA + a 5'-end dephospho-ribonucleoside-RNA + H(+). Inhibited by Cu(2+) and Zn(2+). Its function is as follows. Releases mononucleotides from RNA in the order of 3'-GMP &gt; 3'-UMP &gt; 3'-AMP &gt; 3'-CMP. This chain is Ribonuclease DdI (ddiA), found in Dictyostelium discoideum (Social amoeba).